Reading from the N-terminus, the 615-residue chain is Gluconate 2-dehydrogenase flavoprotein (615 aa).

The signal sequence occupies residues 1 to 22 (MERGERVSVPVSGYSRGEGVTV). H542 functions as the Proton acceptor in the catalytic mechanism.

This sequence belongs to the GMC oxidoreductase family. In terms of assembly, heterotrimer. FAD serves as cofactor.

Its subcellular location is the cell membrane. It catalyses the reaction D-gluconate + A = 2-dehydro-D-gluconate + AH2. Part of the heterotrimer that catalyzes the conversion of D-gluconate to 2-dehydro-D-gluconate. This subunit functions as the dehydrogenase. The protein is Gluconate 2-dehydrogenase flavoprotein of Pantoea cypripedii (Pectobacterium cypripedii).